The chain runs to 354 residues: Nicotinate-nucleotide--dimethylbenzimidazole phosphoribosyltransferase (354 aa).

Glu317 acts as the Proton acceptor in catalysis.

It belongs to the CobT family. As to quaternary structure, homodimer.

It carries out the reaction 5,6-dimethylbenzimidazole + nicotinate beta-D-ribonucleotide = alpha-ribazole 5'-phosphate + nicotinate + H(+). The protein operates within nucleoside biosynthesis; alpha-ribazole biosynthesis; alpha-ribazole from 5,6-dimethylbenzimidazole: step 1/2. Functionally, catalyzes the synthesis of alpha-ribazole-5'-phosphate from nicotinate mononucleotide (NAMN) and 5,6-dimethylbenzimidazole (DMB). This chain is Nicotinate-nucleotide--dimethylbenzimidazole phosphoribosyltransferase, found in Salmonella arizonae (strain ATCC BAA-731 / CDC346-86 / RSK2980).